A 294-amino-acid polypeptide reads, in one-letter code: Ribosomal protein L11 methyltransferase (294 aa).

4 residues coordinate S-adenosyl-L-methionine: threonine 145, glycine 166, aspartate 188, and asparagine 227.

Belongs to the methyltransferase superfamily. PrmA family.

Its subcellular location is the cytoplasm. It catalyses the reaction L-lysyl-[protein] + 3 S-adenosyl-L-methionine = N(6),N(6),N(6)-trimethyl-L-lysyl-[protein] + 3 S-adenosyl-L-homocysteine + 3 H(+). Its function is as follows. Methylates ribosomal protein L11. The chain is Ribosomal protein L11 methyltransferase from Hydrogenovibrio crunogenus (strain DSM 25203 / XCL-2) (Thiomicrospira crunogena).